We begin with the raw amino-acid sequence, 628 residues long: Netrin-4 (628 aa).

The N-terminal stretch at 1 to 18 (MGSCARLLLLWGCTVVAA) is a signal peptide. Residues 30–261 (CEKACNPRMG…AIYDFIVKGS (232 aa)) form the Laminin N-terminal domain. Residues N56 and N163 are each glycosylated (N-linked (GlcNAc...) asparagine). 12 disulfides stabilise this stretch: C262-C271, C264-C293, C295-C304, C307-C329, C332-C341, C334-C359, C362-C371, C374-C392, C395-C413, C397-C420, C422-C431, and C434-C446. Laminin EGF-like domains are found at residues 262–331 (CFCN…ECRT), 332–394 (CKCN…ACKP), and 395–448 (CSCH…GCRP). N353 carries an N-linked (GlcNAc...) asparagine glycan. A glycan (N-linked (GlcNAc...) asparagine) is linked at N483. Cystine bridges form between C506-C576 and C520-C627. Residues 506–627 (CECKEQTLGN…KVMDILKREC (122 aa)) form the NTR domain.

May form a homodimer. In terms of tissue distribution, expressed in kidney, spleen, mammary gland, aorta, heart, ovary, prostate and fetal spleen.

The protein localises to the secreted. It localises to the extracellular space. The protein resides in the extracellular matrix. Its subcellular location is the basement membrane. May play an important role in neural, kidney and vascular development. Promotes neurite elongation from olfactory bulb explants. The protein is Netrin-4 (NTN4) of Homo sapiens (Human).